The sequence spans 96 residues: Small ribosomal subunit protein bS6c (96 aa).

It belongs to the bacterial ribosomal protein bS6 family.

Its subcellular location is the plastid. It is found in the chloroplast. Binds together with bS18 to 16S ribosomal RNA. This is Small ribosomal subunit protein bS6c (rps6) from Trieres chinensis (Marine centric diatom).